Reading from the N-terminus, the 484-residue chain is Aspartyl/glutamyl-tRNA(Asn/Gln) amidotransferase subunit B (484 aa).

The protein belongs to the GatB/GatE family. GatB subfamily. As to quaternary structure, heterotrimer of A, B and C subunits.

It carries out the reaction L-glutamyl-tRNA(Gln) + L-glutamine + ATP + H2O = L-glutaminyl-tRNA(Gln) + L-glutamate + ADP + phosphate + H(+). The enzyme catalyses L-aspartyl-tRNA(Asn) + L-glutamine + ATP + H2O = L-asparaginyl-tRNA(Asn) + L-glutamate + ADP + phosphate + 2 H(+). Allows the formation of correctly charged Asn-tRNA(Asn) or Gln-tRNA(Gln) through the transamidation of misacylated Asp-tRNA(Asn) or Glu-tRNA(Gln) in organisms which lack either or both of asparaginyl-tRNA or glutaminyl-tRNA synthetases. The reaction takes place in the presence of glutamine and ATP through an activated phospho-Asp-tRNA(Asn) or phospho-Glu-tRNA(Gln). The chain is Aspartyl/glutamyl-tRNA(Asn/Gln) amidotransferase subunit B from Dechloromonas aromatica (strain RCB).